Consider the following 349-residue polypeptide: Protein Wnt-7b (349 aa).

The N-terminal stretch at 1–24 (MHRNFRKWIFYVFLCFGVLYVKLG) is a signal peptide. Disulfide bonds link cysteine 73/cysteine 84, cysteine 123/cysteine 131, cysteine 133/cysteine 152, cysteine 200/cysteine 214, and cysteine 202/cysteine 209. N-linked (GlcNAc...) asparagine glycosylation is found at asparagine 83 and asparagine 127. Serine 206 carries the O-palmitoleoyl serine; by PORCN lipid modification. The tract at residues 238 to 266 (VEVVRASRLRQPTFLRIKQLRSYQKPMET) is disordered linker. 6 cysteine pairs are disulfide-bonded: cysteine 278-cysteine 309, cysteine 294-cysteine 304, cysteine 308-cysteine 348, cysteine 324-cysteine 339, cysteine 326-cysteine 336, and cysteine 331-cysteine 332. An N-linked (GlcNAc...) asparagine glycan is attached at asparagine 295.

It belongs to the Wnt family. In terms of assembly, forms a soluble 1:1 complex with AFM; this prevents oligomerization and is required for prolonged biological activity. The complex with AFM may represent the physiological form in body fluids. Interacts with FZD1 and FZD10. Interacts with FZD4 (in vitro). Interacts with PORCN. Interacts with glypican GPC3. Interacts (via intrinsically disordered linker region) with RECK; interaction with RECK confers ligand selectivity for Wnt7 in brain endothelial cells and allows these cells to selectively respond to Wnt7. Palmitoleoylation is required for efficient binding to frizzled receptors. Depalmitoleoylation leads to Wnt signaling pathway inhibition. Moderately expressed in fetal brain, weakly expressed in fetal lung and kidney, and faintly expressed in adult brain, lung and prostate.

Its subcellular location is the secreted. The protein resides in the extracellular space. It is found in the extracellular matrix. In terms of biological role, ligand for members of the frizzled family of seven transmembrane receptors that functions in the canonical Wnt/beta-catenin signaling pathway. Required for normal fusion of the chorion and the allantois during placenta development. Required for central nervous system (CNS) angiogenesis and blood-brain barrier regulation. This chain is Protein Wnt-7b (WNT7B), found in Homo sapiens (Human).